The following is a 1081-amino-acid chain: Importin-4 (1081 aa).

At Met1 the chain carries N-acetylmethionine. The 67-residue stretch at 24–90 (ATEQLQIVLR…KSLILTALQR (67 aa)) folds into the Importin N-terminal domain. 6 HEAT repeats span residues 348-385 (KLCPQLMPMLEEALRSESPYQRKAGLLVLAVLSDGAGD), 390-427 (RLLPPLLQIVCKGLEDPSQVVRNAALFALGQFSENLQP), 431-471 (SYSR…NLGP), 475-513 (PYLPELMECMLQLLRNPSSPRAKELAVSALGAIATAAQA), 895-932 (QFVSRLLPVLLSTAQEADPEVRSNAIFGMGVLAEHGGH), and 936-974 (EHFPKLLGLLFPLLARERHDRVRDNICGALARLLMASPT).

Belongs to the importin beta family. Found in a cytosolic complex with ASF1 (ASF1A or ASF1B) and histones H3 and H4.

It is found in the cytoplasm. It localises to the nucleus. Functionally, nuclear transport receptor that mediates nuclear import of proteins, such as histones, RPS3A, TNP2 and VDR. Serves as receptor for nuclear localization signals (NLS) in cargo substrates. Is thought to mediate docking of the importin/substrate complex to the nuclear pore complex (NPC) through binding to nucleoporin and the complex is subsequently translocated through the pore by an energy requiring, Ran-dependent mechanism. At the nucleoplasmic side of the NPC, Ran binds to the importin, the importin/substrate complex dissociates and importin is re-exported from the nucleus to the cytoplasm where GTP hydrolysis releases Ran. The directionality of nuclear import is thought to be conferred by an asymmetric distribution of the GTP- and GDP-bound forms of Ran between the cytoplasm and nucleus. Mediates the nuclear import of the histone H3-H4 dimer when in complex with ASF1 (ASF1A or ASF1B). Mediates the ligand-independent nuclear import of vitamin D receptor (VDR). In vitro, mediates the nuclear import of human cytomegalovirus UL84 by recognizing a non-classical NLS. The chain is Importin-4 (IPO4) from Homo sapiens (Human).